A 111-amino-acid polypeptide reads, in one-letter code: Ribonuclease P protein component (111 aa).

Belongs to the RnpA family. In terms of assembly, consists of a catalytic RNA component (M1 or rnpB) and a protein subunit.

The enzyme catalyses Endonucleolytic cleavage of RNA, removing 5'-extranucleotides from tRNA precursor.. In terms of biological role, RNaseP catalyzes the removal of the 5'-leader sequence from pre-tRNA to produce the mature 5'-terminus. It can also cleave other RNA substrates such as 4.5S RNA. The protein component plays an auxiliary but essential role in vivo by binding to the 5'-leader sequence and broadening the substrate specificity of the ribozyme. The protein is Ribonuclease P protein component of Clostridium botulinum (strain Okra / Type B1).